A 104-amino-acid polypeptide reads, in one-letter code: Thioredoxin-3 (104 aa).

The Thioredoxin domain maps to 2–104 (SKVIHVTSNE…TLRSTLEANI (103 aa)). Residues C31 and C34 each act as nucleophile in the active site. The cysteines at positions 31 and 34 are disulfide-linked.

The protein belongs to the thioredoxin family.

Functionally, participates in various redox reactions through the reversible oxidation of its active center dithiol to a disulfide and catalyzes dithiol-disulfide exchange reactions. This chain is Thioredoxin-3 (trxC), found in Dictyostelium discoideum (Social amoeba).